Here is a 959-residue protein sequence, read N- to C-terminus: Xylosyltransferase 1 (959 aa).

Topologically, residues 1 to 17 are cytoplasmic; that stretch reads MVAAPCARRLARRSHSA. A helical; Signal-anchor for type II membrane protein membrane pass occupies residues 18–38; sequence LLAALTVLLLQTLVVWNFSSL. The Lumenal segment spans residues 39-959; it reads DSGAGERRGG…GAVKPDGRLR (921 aa). The interval 42-259 is disordered; the sequence is AGERRGGAAV…KYDQPPKCDI (218 aa). Residues 78–104 show a composition bias toward gly residues; that stretch reads RGGGGGGGGGGGGRGPQARARGGGPGE. Over residues 145 to 161 the composition is skewed to basic and acidic residues; sequence KVRTDSNNENSVPKDFE. Residues 163-172 show a composition bias toward polar residues; it reads VDNSNFAPRT. A compositionally biased stretch (basic and acidic residues) spans 177 to 204; that stretch reads HQPELAKKPPSRQKELLKRKLEQQEKGK. N-linked (GlcNAc...) asparagine glycosylation is present at N226. A compositionally biased stretch (basic and acidic residues) spans 249–259; it reads TKYDQPPKCDI. 4 cysteine pairs are disulfide-bonded: C257–C285, C301–C542, C561–C574, and C563–C572. UDP-alpha-D-xylose is bound by residues V333, D361, and 390-392; that span reads TIW. N-linked (GlcNAc...) asparagine glycosylation is present at N421. 494 to 495 is a UDP-alpha-D-xylose binding site; that stretch reads DW. Residues S575 and 598-599 each bind UDP-alpha-D-xylose; that span reads RK. Cystine bridges form between C675–C927 and C920–C933. An N-linked (GlcNAc...) asparagine glycan is attached at N777. Positions 940–959 are disordered; the sequence is SFSPDPKSELGAVKPDGRLR.

Belongs to the glycosyltransferase 14 family. XylT subfamily. Monomer. A divalent metal cation serves as cofactor. Post-translationally, contains 7 disulfide bonds. In terms of processing, N-glycosylated. As to expression, widely expressed. Expressed at higher level in placenta, kidney and pancreas. Weakly expressed in skeletal muscle.

Its subcellular location is the golgi apparatus membrane. It localises to the secreted. It catalyses the reaction UDP-alpha-D-xylose + L-seryl-[protein] = 3-O-(beta-D-xylosyl)-L-seryl-[protein] + UDP + H(+). The protein operates within glycan metabolism; chondroitin sulfate biosynthesis. Its pathway is glycan metabolism; heparan sulfate biosynthesis. Catalyzes the first step in the biosynthesis of chondroitin sulfate and dermatan sulfate proteoglycans, such as DCN. Transfers D-xylose from UDP-D-xylose to specific serine residues of the core protein. Required for normal embryonic and postnatal skeleton development, especially of the long bones. Required for normal maturation of chondrocytes during bone development, and normal onset of ossification. This Homo sapiens (Human) protein is Xylosyltransferase 1 (XYLT1).